We begin with the raw amino-acid sequence, 423 residues long: Enolase (423 aa).

Q166 contacts (2R)-2-phosphoglycerate. Residue E208 is the Proton donor of the active site. Positions 242, 283, and 310 each coordinate Mg(2+). (2R)-2-phosphoglycerate is bound by residues K335, R364, S365, and K386. The active-site Proton acceptor is the K335.

Belongs to the enolase family. Mg(2+) is required as a cofactor.

Its subcellular location is the cytoplasm. It is found in the secreted. It localises to the cell surface. It carries out the reaction (2R)-2-phosphoglycerate = phosphoenolpyruvate + H2O. It functions in the pathway carbohydrate degradation; glycolysis; pyruvate from D-glyceraldehyde 3-phosphate: step 4/5. Its function is as follows. Catalyzes the reversible conversion of 2-phosphoglycerate (2-PG) into phosphoenolpyruvate (PEP). It is essential for the degradation of carbohydrates via glycolysis. The protein is Enolase of Elusimicrobium minutum (strain Pei191).